Reading from the N-terminus, the 119-residue chain is U9-hexatoxin-Hi1 (119 aa).

A signal peptide spans 1–17 (MKLYLVILVTSVALAAA). The propeptide occupies 18–53 (SPTRTKEEPIEDELLEALLSVEKSLFNEETTVMEKR). Disulfide bonds link cysteine 55–cysteine 73, cysteine 66–cysteine 79, cysteine 70–cysteine 117, and cysteine 72–cysteine 88.

This sequence belongs to the neurotoxin 03 (Tx2) family. 03 subfamily. Expressed by the venom gland.

Its subcellular location is the secreted. Its function is as follows. Probable ion channel inhibitor. In Hadronyche infensa (Fraser island funnel-web spider), this protein is U9-hexatoxin-Hi1.